The sequence spans 209 residues: MSKQKHSASSGRWLKEHFDDKYANEARKKGYRSRAYFKIEEIQTKDKLLKSGMTVVDLGAAPGGWSQYAAKIIGEEGQIIACDLLPMDPIAGVSFLQGDFRDEAVLDALLERIQPSMVDVVMSDMAPNIAGNNSVDQPRAMYLVELALDMCRQVLAPNGSFVVKVFQGEGFDQFVKEVRDMFKVVKIRKPDSSRARSREVFVVATGYKG.

S-adenosyl-L-methionine contacts are provided by G63, W65, D83, D99, and D124. Catalysis depends on K164, which acts as the Proton acceptor.

Belongs to the class I-like SAM-binding methyltransferase superfamily. RNA methyltransferase RlmE family.

The protein resides in the cytoplasm. It carries out the reaction uridine(2552) in 23S rRNA + S-adenosyl-L-methionine = 2'-O-methyluridine(2552) in 23S rRNA + S-adenosyl-L-homocysteine + H(+). Specifically methylates the uridine in position 2552 of 23S rRNA at the 2'-O position of the ribose in the fully assembled 50S ribosomal subunit. In Vibrio campbellii (strain ATCC BAA-1116), this protein is Ribosomal RNA large subunit methyltransferase E.